Reading from the N-terminus, the 102-residue chain is NADH-quinone oxidoreductase subunit K 1 (102 aa).

The next 3 helical transmembrane spans lie at 6 to 26 (LNAY…GVLV), 31 to 51 (LAIL…FVAF), and 65 to 85 (FLVI…TVLL).

Belongs to the complex I subunit 4L family. As to quaternary structure, NDH-1 is composed of 14 different subunits. Subunits NuoA, H, J, K, L, M, N constitute the membrane sector of the complex.

It localises to the cell membrane. The enzyme catalyses a quinone + NADH + 5 H(+)(in) = a quinol + NAD(+) + 4 H(+)(out). Functionally, NDH-1 shuttles electrons from NADH, via FMN and iron-sulfur (Fe-S) centers, to quinones in the respiratory chain. The immediate electron acceptor for the enzyme in this species is believed to be a menaquinone. Couples the redox reaction to proton translocation (for every two electrons transferred, four hydrogen ions are translocated across the cytoplasmic membrane), and thus conserves the redox energy in a proton gradient. The sequence is that of NADH-quinone oxidoreductase subunit K 1 from Symbiobacterium thermophilum (strain DSM 24528 / JCM 14929 / IAM 14863 / T).